The following is a 215-amino-acid chain: Uracil phosphoribosyltransferase (215 aa).

GTP is bound at residue 30 to 34 (KGMVR). Residues arginine 80, arginine 105, and 139–147 (DPMIATAST) contribute to the 5-phospho-alpha-D-ribose 1-diphosphate site. Uracil-binding positions include isoleucine 202 and 207 to 209 (GDA). Aspartate 208 is a 5-phospho-alpha-D-ribose 1-diphosphate binding site.

Belongs to the UPRTase family. The cofactor is Mg(2+).

It carries out the reaction UMP + diphosphate = 5-phospho-alpha-D-ribose 1-diphosphate + uracil. It participates in pyrimidine metabolism; UMP biosynthesis via salvage pathway; UMP from uracil: step 1/1. With respect to regulation, allosterically activated by GTP. Functionally, catalyzes the conversion of uracil and 5-phospho-alpha-D-ribose 1-diphosphate (PRPP) to UMP and diphosphate. This is Uracil phosphoribosyltransferase from Metallosphaera sedula (strain ATCC 51363 / DSM 5348 / JCM 9185 / NBRC 15509 / TH2).